A 235-amino-acid polypeptide reads, in one-letter code: BPI fold-containing family A member 2 (235 aa).

Positions 1–20 (MFQLGSLVVLCGLLIGTSES) are cleaved as a signal peptide. An intrachain disulfide couples Cys-161 to Cys-204.

It belongs to the BPI/LBP/Plunc superfamily. Plunc family. In terms of tissue distribution, expressed in parotid, submandibular and sublingual glands.

The protein localises to the secreted. Functionally, has strong antibacterial activity against P.aeruginosa. The polypeptide is BPI fold-containing family A member 2 (Bpifa2) (Rattus norvegicus (Rat)).